The primary structure comprises 353 residues: Chorismate synthase (353 aa).

Residues Arg-48 and Arg-54 each contribute to the NADP(+) site. FMN-binding positions include 125–127 (RSS), 238–239 (NA), Gly-278, 293–297 (KPTSS), and Arg-319.

It belongs to the chorismate synthase family. As to quaternary structure, homotetramer. It depends on FMNH2 as a cofactor.

The enzyme catalyses 5-O-(1-carboxyvinyl)-3-phosphoshikimate = chorismate + phosphate. The protein operates within metabolic intermediate biosynthesis; chorismate biosynthesis; chorismate from D-erythrose 4-phosphate and phosphoenolpyruvate: step 7/7. Functionally, catalyzes the anti-1,4-elimination of the C-3 phosphate and the C-6 proR hydrogen from 5-enolpyruvylshikimate-3-phosphate (EPSP) to yield chorismate, which is the branch point compound that serves as the starting substrate for the three terminal pathways of aromatic amino acid biosynthesis. This reaction introduces a second double bond into the aromatic ring system. The sequence is that of Chorismate synthase from Bordetella pertussis (strain Tohama I / ATCC BAA-589 / NCTC 13251).